A 583-amino-acid chain; its full sequence is Afadin- and alpha-actinin-binding protein (583 aa).

3 coiled-coil regions span residues 108 to 220 (NNVE…LAIE), 255 to 333 (DYEA…QLTN), and 420 to 453 (EEKE…AIRL). The segment at 285–328 (LSPCPPLNRGGSAEESQELGDSDREERSAETSRETLDQSCEHAR) is disordered. The segment covering 305–328 (DSDREERSAETSRETLDQSCEHAR) has biased composition (basic and acidic residues). The disordered stretch occupies residues 480–527 (DRMRSSSSDGQSALSVKSEPEIRTSSSKAPPVKSSAYTTFSTPKSSKS). Over residues 484-494 (SSSSDGQSALS) the composition is skewed to polar residues. A compositionally biased stretch (low complexity) spans 504 to 515 (SSSKAPPVKSSA). Residues 516–527 (YTTFSTPKSSKS) are compositionally biased toward polar residues.

The protein belongs to the ADIP family.

Its subcellular location is the cell junction. It localises to the adherens junction. The protein localises to the cytoplasm. It is found in the cytoskeleton. The protein resides in the microtubule organizing center. Its subcellular location is the centrosome. It localises to the centriolar satellite. Belongs to an adhesion system, which plays a role in the organization of homotypic, interneuronal and heterotypic cell-cell adherens junctions (AJs). Involved in cell movement. Acts as a centrosome maturation factor, probably by maintaining the integrity of the pericentriolar material and proper microtubule nucleation at mitotic spindle poles. The protein is Afadin- and alpha-actinin-binding protein (ssx2ip) of Oryzias latipes (Japanese rice fish).